A 602-amino-acid chain; its full sequence is Elongation factor 4 (602 aa).

Positions 7-189 constitute a tr-type G domain; the sequence is RKIRNFSIIA…AIVKNIPPPT (183 aa). GTP is bound by residues 19 to 24 and 136 to 139; these read DHGKST and NKID.

Belongs to the TRAFAC class translation factor GTPase superfamily. Classic translation factor GTPase family. LepA subfamily.

It localises to the cell membrane. The enzyme catalyses GTP + H2O = GDP + phosphate + H(+). In terms of biological role, required for accurate and efficient protein synthesis under certain stress conditions. May act as a fidelity factor of the translation reaction, by catalyzing a one-codon backward translocation of tRNAs on improperly translocated ribosomes. Back-translocation proceeds from a post-translocation (POST) complex to a pre-translocation (PRE) complex, thus giving elongation factor G a second chance to translocate the tRNAs correctly. Binds to ribosomes in a GTP-dependent manner. This chain is Elongation factor 4, found in Alkaliphilus metalliredigens (strain QYMF).